A 140-amino-acid chain; its full sequence is Protein SNA4 (140 aa).

Residues Met-1–Cys-8 are Cytoplasmic-facing. S-palmitoyl cysteine attachment occurs at residues Cys-2, Cys-3, Cys-5, Cys-7, and Cys-8. Residues Thr-9–Leu-29 traverse the membrane as a helical segment. Residues Arg-30–Asn-41 lie on the Vacuolar side of the membrane. Residues Val-42 to Ile-62 traverse the membrane as a helical segment. Over Thr-63–Pro-140 the chain is Cytoplasmic. The segment at Arg-84–Pro-140 is disordered. Residues Asn-85–Arg-108 show a composition bias toward polar residues. A Glycyl lysine isopeptide (Lys-Gly) (interchain with G-Cter in ubiquitin) cross-link involves residue Lys-128. Phosphoserine is present on Ser-134.

This sequence belongs to the UPF0057 (PMP3) family.

Its subcellular location is the vacuole membrane. The polypeptide is Protein SNA4 (SNA4) (Saccharomyces cerevisiae (strain ATCC 204508 / S288c) (Baker's yeast)).